A 486-amino-acid polypeptide reads, in one-letter code: Probable transporter MCH1 (486 aa).

A run of 6 helical transmembrane segments spans residues 31-51 (ISFF…LFSL), 69-89 (FIAS…GYLA), 91-111 (CYGP…SYFV), 132-152 (FGIC…SSLL), 164-184 (LAIS…SQLM), and 204-224 (FFGV…SVVS). A disordered region spans residues 236–260 (EMEEADEESPLMTSRSRHSHHSCED). A helical transmembrane segment spans residues 280-300 (FINFLKDKSAWLLLASLILNI). Residue asparagine 322 is glycosylated (N-linked (GlcNAc...) asparagine). The next 2 helical transmembrane spans lie at 327–348 (VSIM…SDYL) and 357–377 (ICRV…QFMV). An N-linked (GlcNAc...) asparagine glycan is attached at asparagine 390. Transmembrane regions (helical) follow at residues 395–415 (GGLF…DMMG) and 417–437 (TWGS…IFYG). Asparagine 457 is a glycosylation site (N-linked (GlcNAc...) asparagine). Residues 458 to 478 (LTAVGLSVSLILIIIVWKGIW) traverse the membrane as a helical segment.

Belongs to the major facilitator superfamily.

The protein resides in the vacuole membrane. In terms of biological role, probable transporter. In Debaryomyces hansenii (strain ATCC 36239 / CBS 767 / BCRC 21394 / JCM 1990 / NBRC 0083 / IGC 2968) (Yeast), this protein is Probable transporter MCH1 (MCH1).